A 218-amino-acid chain; its full sequence is Uracil-DNA glycosylase (218 aa).

The active-site Proton acceptor is the Asp-68.

The protein belongs to the uracil-DNA glycosylase (UDG) superfamily. UNG family. In terms of assembly, homodimer. Interacts with protein OPG148. Component of the Uracil-DNA glycosylase(UDG)-OPG148-polymerase complex; OPG148 and UDG form a heterodimeric processivity factor that associates with OPG71 to form the processive polymerase holoenzyme.

It carries out the reaction Hydrolyzes single-stranded DNA or mismatched double-stranded DNA and polynucleotides, releasing free uracil.. Plays an essential role in viral replication as a component of the DNA polymerase processivity factor. Excises uracil residues from the DNA which can arise as a result of misincorporation of dUMP residues by DNA polymerase or due to deamination of cytosine. This Variola virus protein is Uracil-DNA glycosylase (OPG116).